A 338-amino-acid chain; its full sequence is Photosystem II assembly lipoprotein Ycf48 (338 aa).

Positions Met1–Gly23 are cleaved as a signal peptide. Cys24 is lipidated: N-palmitoyl cysteine. Cys24 carries the S-diacylglycerol cysteine lipid modification.

Belongs to the Ycf48 family. Part of early PSII assembly complexes which includes D1 (psbA) and PsbI; not found in mature PSII. Binds to the lumenal side of PSII complexes. Interacts with YidC.

It is found in the cellular thylakoid membrane. In terms of biological role, a factor required for optimal assembly of photosystem II (PSII), acting in the early stages of PSII assembly. Also plays a role in replacement of photodamaged D1 (psbA). Assists YidC in synthesis of chlorophyll-binding proteins. This is Photosystem II assembly lipoprotein Ycf48 from Prochlorococcus marinus (strain NATL2A).